A 316-amino-acid polypeptide reads, in one-letter code: MATNKPANLNDLQKAINDISKDALKYLTDNKASVTTFHDQIGYAGYDAATLIGILKDKGGATLAQDVVKMIVMRYVRGTGFVKDVTKKTKATAGSEEAAALVARYGLVSSVGSNANAITLGRVAQLFPNVSFEVTKQFTGLKMAIDSSDLSMSGTDSLLWDFVPQYITLDSSSAPYCTTKSVAHILFSIHVIHAFLVTKKTMPEAKKKERGLLKDIDIIKYTTGLLVITCQSKNLNEAKKKSGRTKVCEPYCVNEKFKESFLALLASFGKNVVCSYGTQVKQFLAEQCSLMKTIVDNSSKTQDEMKALIIEFFEEE.

Tyrosine 43, tyrosine 46, valine 76, arginine 122, and lysine 240 together coordinate RNA.

It belongs to the tenuiviruses nucleocapsid protein family.

Its subcellular location is the virion. It is found in the host cytoplasm. In terms of biological role, encapsidates the genome, protecting it from nucleases. The encapsidated genomic RNA is termed the nucleocapsid (NC), and serves as template for viral transcription and replication. This Maize stripe virus (MStV) protein is Nucleoprotein.